We begin with the raw amino-acid sequence, 204 residues long: MRVIGLTGGIGSGKSYVAERLAERGAAVVDTDAIAHEITAPGGAAIPKLVEAFGPGILRADGAMDRDAMRALAFSDATAKARLERITHPLIREISLSRGAAAQASDACPYLVYVVPLLVESLSGHHSWRALVDRILVIDCPVETQIARVIARNGLPRALVESIVARQATREARLAVADDVIDNGGALADLLPQIDRLDLAYRAH.

The DPCK domain occupies 3–204 (VIGLTGGIGS…DRLDLAYRAH (202 aa)). 11–16 (GSGKSY) contacts ATP.

It belongs to the CoaE family.

The protein resides in the cytoplasm. The catalysed reaction is 3'-dephospho-CoA + ATP = ADP + CoA + H(+). Its pathway is cofactor biosynthesis; coenzyme A biosynthesis; CoA from (R)-pantothenate: step 5/5. Catalyzes the phosphorylation of the 3'-hydroxyl group of dephosphocoenzyme A to form coenzyme A. This chain is Dephospho-CoA kinase, found in Ralstonia nicotianae (strain ATCC BAA-1114 / GMI1000) (Ralstonia solanacearum).